The sequence spans 284 residues: Two-pore potassium channel 4 (284 aa).

Residues 1-21 (MEEENLLNENLLHPNESSPEE) are disordered. Residues 1–31 (MEEENLLNENLLHPNESSPEETQVTTVSKSK) are Cytoplasmic-facing. The chain crosses the membrane as a helical span at residues 32-52 (WTILVLAMILLLVYLTFGVCT). Residues 70-89 (DAFYFSIVTFSTVGYGDIVP) constitute an intramembrane region (pore-forming). A helical membrane pass occupies residues 93-113 (TTKILTIVLVSTGVVFLDYLL). Over 114–156 (NRVVSHVLSLQENAILDRINKTRNRAIRDHIAEDGKIRLKWKL) the chain is Cytoplasmic. Residues 157–177 (CLAFCAVGLCVGSGALFLHVF) form a helical membrane-spanning segment. Positions 184-203 (DSVYLSVISVTTVGYGDKTF) form an intramembrane region, pore-forming. The helical transmembrane segment at 211 to 231 (FAVFWLLLSTIAMATLFLYLA) threads the bilayer. Over 232–284 (EMRIDRTTVMKLPPSESEFIVFKLRESGRISEDDIKQIVREFENLEEVPSSGS) the chain is Cytoplasmic.

This sequence belongs to the two pore domain potassium channel (TC 1.A.1.7) family. As to quaternary structure, homodimer. As to expression, predominantly expressed in pollen.

It is found in the cell membrane. Functionally, voltage-independent, instantaneously activating, potassium-selective plasma membrane ion channel. Open rectifier. Regulated by cytoplasmic pH and extra-cellular calcium. Has some permeability for Rb(+) and NH(4)(+), but none for Na(+) or Li(+). This chain is Two-pore potassium channel 4 (TPK4), found in Arabidopsis thaliana (Mouse-ear cress).